The following is a 207-amino-acid chain: MTERRVPFSLLRSPSWDPFRDWYPAHSRLFDQAFGLPRLPEEWSQWLSHSGWPGYVRPLPPPAIEGPAAVAAPAYSRLLSRQLSSGVSEIQQTADRWRVSLDVNHFAPEELTVKTKDGVVEITGKHEERQDEHGFISRCFTRKYTLPPGVDPTQVSSSLSPEGTLSVEAPLPKPATQSAEITIPVTFEARAQLGGTEAGKSEKPGTK.

Residue R12 is modified to Omega-N-methylarginine. At S13 the chain carries Phosphoserine. Residue S15 is modified to Phosphoserine; by MAPKAPK2 and MAPKAPK3. S27 carries the post-translational modification Phosphoserine. The interaction with TGFB1I1 stretch occupies residues 72 to 207 (APAYSRLLSR…AGKSEKPGTK (136 aa)). The sHSP domain occupies 78 to 186 (LLSRQLSSGV…QSAEITIPVT (109 aa)). Phosphoserine; by MAPKAPK2, MAPKAPK3 and MAPKAPK5 occurs at positions 80 and 84. S85, S88, and S100 each carry phosphoserine. N6-acetyllysine is present on K125. Residues 151–181 (DPTQVSSSLSPEGTLSVEAPLPKPATQSAEI) are disordered. The span at 153–163 (TQVSSSLSPEG) shows a compositional bias: polar residues. Residue T176 is modified to Phosphothreonine. S178 and S201 each carry phosphoserine.

This sequence belongs to the small heat shock protein (HSP20) family. Homooligomer. Homodimer; becomes monomeric upon activation. Heterooligomer; with HSPB6. Associates with alpha- and beta-tubulin. Interacts with TGFB1I1. Interacts with CRYAB. Interacts with HSPB8. Interacts with HSPBAP1. Post-translationally, phosphorylated upon exposure to protein kinase C activators and heat shock. Phosphorylation by MAPKAPK2 and MAPKAPK3 in response to stress dissociates HSPB1 from large small heat-shock protein (sHsps) oligomers and impairs its chaperone activity and ability to protect against oxidative stress effectively. Phosphorylation by MAPKAPK5 in response to PKA stimulation induces F-actin rearrangement.

It is found in the cytoplasm. It localises to the nucleus. The protein localises to the cytoskeleton. Its subcellular location is the spindle. Its function is as follows. Small heat shock protein which functions as a molecular chaperone probably maintaining denatured proteins in a folding-competent state. Plays a role in stress resistance and actin organization. Through its molecular chaperone activity may regulate numerous biological processes including the phosphorylation and the axonal transport of neurofilament proteins. This chain is Heat shock protein beta-1 (HSPB1), found in Sus scrofa (Pig).